The sequence spans 506 residues: BTB/POZ domain-containing protein At3g22104 (506 aa).

The BTB domain occupies 6 to 76; sequence SDLEVDINGE…CYNDGRVAVM (71 aa). The NPH3 domain occupies 187–435; it reads TWWFDEVLVL…LDEQQQQQQQ (249 aa). Residues 421–492 adopt a coiled-coil conformation; that stretch reads QAIETLDEQQ…MEVIKKRSKS (72 aa). Positions 485–506 are disordered; that stretch reads VIKKRSKSSSKGSNRSLPKLCS.

This sequence belongs to the NPH3 family.

It participates in protein modification; protein ubiquitination. Its function is as follows. May act as a substrate-specific adapter of an E3 ubiquitin-protein ligase complex (CUL3-RBX1-BTB) which mediates the ubiquitination and subsequent proteasomal degradation of target proteins. The sequence is that of BTB/POZ domain-containing protein At3g22104 from Arabidopsis thaliana (Mouse-ear cress).